Reading from the N-terminus, the 133-residue chain is Small ribosomal subunit protein uS19 (133 aa).

It belongs to the universal ribosomal protein uS19 family. In terms of assembly, part of the 30S ribosomal subunit.

Its function is as follows. Protein S19 forms a complex with S13 that binds strongly to the 16S ribosomal RNA. The sequence is that of Small ribosomal subunit protein uS19 from Thermococcus kodakarensis (strain ATCC BAA-918 / JCM 12380 / KOD1) (Pyrococcus kodakaraensis (strain KOD1)).